The following is a 224-amino-acid chain: Response regulator protein GraR (224 aa).

Residues 2-115 enclose the Response regulatory domain; sequence QILLVEDDNT…VLIAKLQAIY (114 aa). 4-aspartylphosphate is present on Asp-51. The segment at residues 126 to 224 is a DNA-binding region (ompR/PhoB-type); it reads KRTLTWQDAI…KVGKGYMAHE (99 aa). Thr-128, Thr-130, and Thr-149 each carry phosphothreonine.

In terms of assembly, interacts with GraX. Phosphorylated by GraS. Phosphorylated by Stk1; phosphorylation increases the DNA-binding activity of GraR.

It is found in the cytoplasm. In terms of biological role, member of the two-component regulatory system GraR/GraS involved in resistance against cationic antimicrobial peptides (CAMPs). Upon phosphorylation by GraS, functions as a transcription regulator by direct binding to promoter regions of target genes such as adhesins, exoproteins, transporters, toxins, and proteins involved in cell wall synthesis. Down-regulates the expression of many genes involved in RNA and amino acid synthesis or glycolysis. This Staphylococcus aureus (strain bovine RF122 / ET3-1) protein is Response regulator protein GraR (graR).